A 365-amino-acid polypeptide reads, in one-letter code: Sesquiterpene synthase 3 (365 aa).

Positions 117, 253, 257, and 261 each coordinate Mg(2+). The DDXXD motif signature appears at aspartate 117–aspartate 121. An NSE/DTE motif motif is present at residues asparagine 253–glutamate 261. (2E,6E)-farnesyl diphosphate is bound by residues arginine 341 and tyrosine 342.

This sequence belongs to the terpene synthase family. Mg(2+) is required as a cofactor.

It catalyses the reaction (2E,6E)-farnesyl diphosphate = delta-cadinene + diphosphate. Its function is as follows. Terpene cyclase that catalyzes the cyclization of farnesyl diphosphate (FPP) to various sesquiterpenes, including beta-elemene gamma-cadinene, delta-cadinene, and alpha-cadinene. This is Sesquiterpene synthase 3 from Postia placenta (strain ATCC 44394 / Madison 698-R) (Brown rot fungus).